The following is a 187-amino-acid chain: ATP synthase subunit b 2 (187 aa).

Polar residues predominate over residues 1–13; that stretch reads MAESHATGTTTHT. Residues 1-21 form a disordered region; it reads MAESHATGTTTHTEVPHGKPE. A helical transmembrane segment spans residues 31–53; that stretch reads ASQLVSFAIAFALLYVIVSRFAL.

This sequence belongs to the ATPase B chain family. F-type ATPases have 2 components, F(1) - the catalytic core - and F(0) - the membrane proton channel. F(1) has five subunits: alpha(3), beta(3), gamma(1), delta(1), epsilon(1). F(0) has three main subunits: a(1), b(2) and c(10-14). The alpha and beta chains form an alternating ring which encloses part of the gamma chain. F(1) is attached to F(0) by a central stalk formed by the gamma and epsilon chains, while a peripheral stalk is formed by the delta and b chains.

The protein localises to the cell inner membrane. Its function is as follows. F(1)F(0) ATP synthase produces ATP from ADP in the presence of a proton or sodium gradient. F-type ATPases consist of two structural domains, F(1) containing the extramembraneous catalytic core and F(0) containing the membrane proton channel, linked together by a central stalk and a peripheral stalk. During catalysis, ATP synthesis in the catalytic domain of F(1) is coupled via a rotary mechanism of the central stalk subunits to proton translocation. In terms of biological role, component of the F(0) channel, it forms part of the peripheral stalk, linking F(1) to F(0). The b'-subunit is a diverged and duplicated form of b found in plants and photosynthetic bacteria. The polypeptide is ATP synthase subunit b 2 (atpF2) (Afipia carboxidovorans (strain ATCC 49405 / DSM 1227 / KCTC 32145 / OM5) (Oligotropha carboxidovorans)).